Consider the following 522-residue polypeptide: Probable protein kinase UbiB (522 aa).

The Protein kinase domain maps to 119-496; the sequence is SFDADPVASA…QRRTNRLLLT (378 aa). Residues 125-133 and Lys147 contribute to the ATP site; that span reads VASASIAQV. Asp282 acts as the Proton acceptor in catalysis. Residues 494 to 514 traverse the membrane as a helical segment; sequence LLTVFYLIGGFVAGGLFAHWI.

The protein belongs to the ABC1 family. UbiB subfamily.

It is found in the cell inner membrane. The protein operates within cofactor biosynthesis; ubiquinone biosynthesis [regulation]. Is probably a protein kinase regulator of UbiI activity which is involved in aerobic coenzyme Q (ubiquinone) biosynthesis. This chain is Probable protein kinase UbiB, found in Leptothrix cholodnii (strain ATCC 51168 / LMG 8142 / SP-6) (Leptothrix discophora (strain SP-6)).